The sequence spans 150 residues: Galectin-1 (150 aa).

In terms of domain architecture, Galectin spans 9 to 141; that stretch reads NQIKLQDDFK…FSSPVTVDIH (133 aa). A carbohydrate contacts are provided by histidine 51, arginine 55, asparagine 64, and glutamate 75.

As to quaternary structure, homotetramer. Oligomerization is required for carbohydrate binding. In terms of tissue distribution, most abundant in fruiting bodies. Very low levels of expression in asexual vegetative mycelia.

It localises to the secreted. The protein localises to the extracellular space. It is found in the extracellular matrix. Its subcellular location is the cell wall. The protein resides in the endomembrane system. In terms of biological role, binds lactose. May play a role in fruiting body formation. In Coprinopsis cinerea (strain Okayama-7 / 130 / ATCC MYA-4618 / FGSC 9003) (Inky cap fungus), this protein is Galectin-1 (Cgl1).